The primary structure comprises 416 residues: Enolase (416 aa).

Gln162 provides a ligand contact to (2R)-2-phosphoglycerate. Residue Glu204 is the Proton donor of the active site. Residues Asp241, Glu282, and Asp309 each contribute to the Mg(2+) site. (2R)-2-phosphoglycerate contacts are provided by Lys334, Arg363, Ser364, and Lys385. The Proton acceptor role is filled by Lys334.

Belongs to the enolase family. Mg(2+) serves as cofactor.

It is found in the cytoplasm. It localises to the secreted. The protein resides in the cell surface. The catalysed reaction is (2R)-2-phosphoglycerate = phosphoenolpyruvate + H2O. Its pathway is carbohydrate degradation; glycolysis; pyruvate from D-glyceraldehyde 3-phosphate: step 4/5. Its function is as follows. Catalyzes the reversible conversion of 2-phosphoglycerate (2-PG) into phosphoenolpyruvate (PEP). It is essential for the degradation of carbohydrates via glycolysis. This Campylobacter concisus (strain 13826) protein is Enolase.